A 488-amino-acid polypeptide reads, in one-letter code: MELYSLTVHELKELLHKREVSAQEVTKSYLERIKEVEPKIDALVTITEEFALERAKVADEMIKNGEAKDLTGIPVIIKDNISTEGIRTTCSSKMLENYIPPYNATVVERLLNEGVVILGKSNLDEFAMGSSTENSAFKTTKNPWDLSRVPGGSSGGSAAAVAADEAAFALGSDTGGSIRQPASLCGVVGMKPTYGLVSRYGLVAFASSLDQIGPFTKDVTDCAIVLNAIAGHDPMDSTSVKIEKPDYTSYLKEDIKGLRIGVAKEFFGAGIEEGVKETVEKAIKVFEDLGAEIIDISVPYVEYALPAYYIIASAEASSNLARYDGIRYGHIAKNYEDLVDMYMTSRSEGFGKEVKRRIMLGTYALSSGYYDAYYKKALKVRTLIKNDFERAFEKCDVIVGPTSPTVAFKIGERTNDPLAMYLADIYTVSVNIAGLPAISIPCGLSEGLPVGLQIIGKHFDEGRILNVAYAFEKAYKFDAKPQAIGGER.

Catalysis depends on charge relay system residues Lys78 and Ser153. Residue Ser177 is the Acyl-ester intermediate of the active site.

The protein belongs to the amidase family. GatA subfamily. As to quaternary structure, heterotrimer of A, B and C subunits.

It catalyses the reaction L-glutamyl-tRNA(Gln) + L-glutamine + ATP + H2O = L-glutaminyl-tRNA(Gln) + L-glutamate + ADP + phosphate + H(+). Functionally, allows the formation of correctly charged Gln-tRNA(Gln) through the transamidation of misacylated Glu-tRNA(Gln) in organisms which lack glutaminyl-tRNA synthetase. The reaction takes place in the presence of glutamine and ATP through an activated gamma-phospho-Glu-tRNA(Gln). In Caldanaerobacter subterraneus subsp. tengcongensis (strain DSM 15242 / JCM 11007 / NBRC 100824 / MB4) (Thermoanaerobacter tengcongensis), this protein is Glutamyl-tRNA(Gln) amidotransferase subunit A.